Reading from the N-terminus, the 284-residue chain is NAD kinase (284 aa).

The Proton acceptor role is filled by Asp-70. Residues 70–71 (DG), 139–140 (NE), Lys-167, Asp-169, Leu-177, 180–185 (TAYNLS), and Gln-236 contribute to the NAD(+) site.

Belongs to the NAD kinase family. A divalent metal cation is required as a cofactor.

It is found in the cytoplasm. The catalysed reaction is NAD(+) + ATP = ADP + NADP(+) + H(+). Its function is as follows. Involved in the regulation of the intracellular balance of NAD and NADP, and is a key enzyme in the biosynthesis of NADP. Catalyzes specifically the phosphorylation on 2'-hydroxyl of the adenosine moiety of NAD to yield NADP. The polypeptide is NAD kinase (Helicobacter pylori (strain ATCC 700392 / 26695) (Campylobacter pylori)).